The following is a 1383-amino-acid chain: DNA-directed RNA polymerase subunit beta'' (1383 aa).

Zn(2+) is bound by residues C220, C289, C296, and C299.

This sequence belongs to the RNA polymerase beta' chain family. RpoC2 subfamily. In terms of assembly, in plastids the minimal PEP RNA polymerase catalytic core is composed of four subunits: alpha, beta, beta', and beta''. When a (nuclear-encoded) sigma factor is associated with the core the holoenzyme is formed, which can initiate transcription. Requires Zn(2+) as cofactor.

The protein resides in the plastid. Its subcellular location is the chloroplast. It carries out the reaction RNA(n) + a ribonucleoside 5'-triphosphate = RNA(n+1) + diphosphate. DNA-dependent RNA polymerase catalyzes the transcription of DNA into RNA using the four ribonucleoside triphosphates as substrates. The chain is DNA-directed RNA polymerase subunit beta'' from Oenothera argillicola (Appalachian evening primrose).